Reading from the N-terminus, the 305-residue chain is Target of rapamycin complex subunit LST8-1 (305 aa).

WD repeat units follow at residues 1 to 30 (MSQP…CYRT), 33 to 71 (YPDS…PQPV), 76 to 115 (SHTN…CQKE), 117 to 156 (ESVA…CSCE), 160 to 199 (EVDT…QTMT), 209 to 248 (AHNG…LEKV), and 251 to 292 (GHQR…KVYQ).

Belongs to the WD repeat LST8 family. In terms of assembly, the target of rapamycin complex 1 (TORC1) is composed of at least RAPTOR, LST8 and TOR. Interacts with TOR. As to expression, expressed in the root central cylinder, root tips, emerging lateral roots, vasculature of cotyledons, leaf stomata, leaf stipules, anthers, pollen, filaments, and vasculature of petals and sepals.

It localises to the endosome. Functionally, component of TORC1 complex, which is an essential cell growth regulator that controls plant development. Acts by activating transcription, protein synthesis and ribosome biogenesis, and inhibiting mRNA degradation and autophagy. Involved in regulating amino acid accumulation and the synthesis of myo-inositol and raffinose during plant adaptation to long days. Involved in the regulation of plant growth and abscisic acid (ABA) accumulation. Acts as a positive regulation of the ABA biosynthetic genes ZEP, NCED3 and AAO3, and negative regulator of the ABA catabolic genes CYP707A2 and CYP707A3. The polypeptide is Target of rapamycin complex subunit LST8-1 (Arabidopsis thaliana (Mouse-ear cress)).